Reading from the N-terminus, the 547-residue chain is Glucose-6-phosphate isomerase (547 aa).

The active-site Proton donor is the Glu351. Residues His382 and Lys509 contribute to the active site.

The protein belongs to the GPI family.

The protein resides in the cytoplasm. It catalyses the reaction alpha-D-glucose 6-phosphate = beta-D-fructose 6-phosphate. Its pathway is carbohydrate biosynthesis; gluconeogenesis. It functions in the pathway carbohydrate degradation; glycolysis; D-glyceraldehyde 3-phosphate and glycerone phosphate from D-glucose: step 2/4. In terms of biological role, catalyzes the reversible isomerization of glucose-6-phosphate to fructose-6-phosphate. This Coxiella burnetii (strain CbuG_Q212) (Coxiella burnetii (strain Q212)) protein is Glucose-6-phosphate isomerase.